A 435-amino-acid chain; its full sequence is T-box transcription factor T (435 aa).

The segment at residues 51-219 is a DNA-binding region (T-box); the sequence is LWLRFKELTN…YNPFAKAFLD (169 aa). The interval 279–308 is disordered; it reads YPTLRSHRSSPYPSPYAHRNNSPTYSDNSP. Positions 297–308 are enriched in polar residues; it reads RNNSPTYSDNSP.

Monomer. In terms of tissue distribution, detected in testis, but not in other, normal tissues. Detected in lung tumors (at protein level).

It is found in the nucleus. Functionally, involved in the transcriptional regulation of genes required for mesoderm formation and differentiation. Binds to a palindromic T site 5'-TTCACACCTAGGTGTGAA-3' DNA sequence and activates gene transcription when bound to such a site. The protein is T-box transcription factor T of Homo sapiens (Human).